The chain runs to 54 residues: UPF0391 membrane protein Bpro_0879 (54 aa).

Transmembrane regions (helical) follow at residues 6 to 26 and 30 to 50; these read VVFL…IAAG and IAKI…VMGL.

The protein belongs to the UPF0391 family.

The protein localises to the cell membrane. The chain is UPF0391 membrane protein Bpro_0879 from Polaromonas sp. (strain JS666 / ATCC BAA-500).